Reading from the N-terminus, the 766-residue chain is Oligopeptide transporter 7 (766 aa).

The interval 1–58 (MEESEQVLPLLTNPKDLTNPSYASSSSSSSEPRDETEDLLLPISDENEEEEEENSPIR) is disordered. Over residues 45 to 54 (DENEEEEEEN) the composition is skewed to acidic residues. Helical transmembrane passes span 79-99 (MWVLGTLSCILLSFLNQFFWY), 104-124 (LTISAISAQIAVVPLGRLMAA), 154-174 (ITIFANAGAGSVYAIHVVTVV), 184-204 (FFVSFIVIVTTQVLGFGWAGI), 247-267 (FVIAFVCSFAYYVFPGYLFQI), 287-307 (IGSGLHGLGVGAIGLDWSTIS), 324-344 (VGVGFVLVIYVLVPICYWLDV), 390-410 (LCTFFAISYGVGFAALSATIM), 446-466 (VPEWWFWCILVTNVGATIFAC), 477-497 (WWGVLLACTVAIIFTLPIGII), 509-529 (IITEYIIGYIYPGYPVANMCF), 561-581 (FMAQIVGTLISCFVYLTTAWW), 627-647 (LYKSVNWFFLVGAIAPILVWL), 676-696 (ATAVNYTTWVLAGFLSGFVVF), and 709-729 (VLSGALDAGLAFMGVLLYMCL).

This sequence belongs to the oligopeptide OPT transporter (TC 2.A.67.1) family. In terms of tissue distribution, expressed in the major and the first-order veins and in the hydathodes of the leaves. In the roots, expressed in circular zones surrounding lateral root primordia and in some part of the root epidermis. Expressed also in the sepals and the cortical tissues of the stem, but not in the conducting bundles, the petals or the reproductive tissues.

The protein resides in the membrane. In terms of biological role, involved in the translocation of tetra- and pentapeptides across the cellular membrane in an energy-dependent manner. May also transport cadmium complexes. In Arabidopsis thaliana (Mouse-ear cress), this protein is Oligopeptide transporter 7 (OPT7).